Here is a 903-residue protein sequence, read N- to C-terminus: Protein translocase subunit SecA (903 aa).

ATP contacts are provided by residues Gln-87, 105–109 (GEGKT), and Asp-507. A disordered region spans residues 854-893 (STMADSSGDVKSSTAESKAPYVRDGRKVGRNEPCPCGSGK). A compositionally biased stretch (polar residues) spans 856–869 (MADSSGDVKSSTAE). The segment covering 874 to 883 (YVRDGRKVGR) has biased composition (basic and acidic residues). The Zn(2+) site is built by Cys-887, Cys-889, Cys-898, and His-899.

Belongs to the SecA family. As to quaternary structure, monomer and homodimer. Part of the essential Sec protein translocation apparatus which comprises SecA, SecYEG and auxiliary proteins SecDF-YajC and YidC. Requires Zn(2+) as cofactor.

The protein resides in the cell inner membrane. The protein localises to the cytoplasm. It catalyses the reaction ATP + H2O + cellular proteinSide 1 = ADP + phosphate + cellular proteinSide 2.. Its function is as follows. Part of the Sec protein translocase complex. Interacts with the SecYEG preprotein conducting channel. Has a central role in coupling the hydrolysis of ATP to the transfer of proteins into and across the cell membrane, serving both as a receptor for the preprotein-SecB complex and as an ATP-driven molecular motor driving the stepwise translocation of polypeptide chains across the membrane. This Nitrosococcus oceani (strain ATCC 19707 / BCRC 17464 / JCM 30415 / NCIMB 11848 / C-107) protein is Protein translocase subunit SecA.